A 299-amino-acid polypeptide reads, in one-letter code: 33 kDa chaperonin (299 aa).

2 disulfides stabilise this stretch: Cys-234–Cys-236 and Cys-268–Cys-271.

The protein belongs to the HSP33 family. In terms of processing, under oxidizing conditions two disulfide bonds are formed involving the reactive cysteines. Under reducing conditions zinc is bound to the reactive cysteines and the protein is inactive.

The protein localises to the cytoplasm. Its function is as follows. Redox regulated molecular chaperone. Protects both thermally unfolding and oxidatively damaged proteins from irreversible aggregation. Plays an important role in the bacterial defense system toward oxidative stress. In Pseudomonas putida (strain ATCC 700007 / DSM 6899 / JCM 31910 / BCRC 17059 / LMG 24140 / F1), this protein is 33 kDa chaperonin.